Reading from the N-terminus, the 872-residue chain is Alanine--tRNA ligase (872 aa).

His566, His570, Cys668, and His672 together coordinate Zn(2+).

The protein belongs to the class-II aminoacyl-tRNA synthetase family. The cofactor is Zn(2+).

The protein resides in the cytoplasm. The catalysed reaction is tRNA(Ala) + L-alanine + ATP = L-alanyl-tRNA(Ala) + AMP + diphosphate. Functionally, catalyzes the attachment of alanine to tRNA(Ala) in a two-step reaction: alanine is first activated by ATP to form Ala-AMP and then transferred to the acceptor end of tRNA(Ala). Also edits incorrectly charged Ser-tRNA(Ala) and Gly-tRNA(Ala) via its editing domain. This Lactococcus lactis subsp. cremoris (strain MG1363) protein is Alanine--tRNA ligase.